The chain runs to 568 residues: Proline--tRNA ligase (568 aa).

Belongs to the class-II aminoacyl-tRNA synthetase family. ProS type 1 subfamily. In terms of assembly, homodimer.

It is found in the cytoplasm. It catalyses the reaction tRNA(Pro) + L-proline + ATP = L-prolyl-tRNA(Pro) + AMP + diphosphate. In terms of biological role, catalyzes the attachment of proline to tRNA(Pro) in a two-step reaction: proline is first activated by ATP to form Pro-AMP and then transferred to the acceptor end of tRNA(Pro). As ProRS can inadvertently accommodate and process non-cognate amino acids such as alanine and cysteine, to avoid such errors it has two additional distinct editing activities against alanine. One activity is designated as 'pretransfer' editing and involves the tRNA(Pro)-independent hydrolysis of activated Ala-AMP. The other activity is designated 'posttransfer' editing and involves deacylation of mischarged Ala-tRNA(Pro). The misacylated Cys-tRNA(Pro) is not edited by ProRS. The protein is Proline--tRNA ligase of Alkalilimnicola ehrlichii (strain ATCC BAA-1101 / DSM 17681 / MLHE-1).